The sequence spans 1992 residues: Fer-1-like protein 4 (1992 aa).

C2 domains follow at residues M1–E97, P214–A330, and T369–N502. The Extracellular segment spans residues M1 to W1952. 3 disordered regions span residues R554–I606, A661–Q686, and S691–W710. The segment covering P559–S569 has biased composition (polar residues). Positions T572 to K581 are enriched in basic residues. 2 consecutive C2 domains span residues P951–F1078 and I1126–E1250. Disordered regions lie at residues E1245–T1276 and F1322–S1361. Composition is skewed to acidic residues over residues P1247–T1257 and S1328–D1337. 2 consecutive C2 domains span residues S1430 to G1549 and V1675 to S1824. Residues D1464, D1470, D1519, D1521, D1527, D1795, S1798, and D1801 each coordinate Ca(2+). The interval E1862 to E1885 is disordered. Residues G1869–A1878 show a composition bias toward basic residues. Residues R1953–L1973 traverse the membrane as a helical segment. The Cytoplasmic segment spans residues V1974–K1992.

It depends on Ca(2+) as a cofactor.

Its subcellular location is the membrane. The chain is Fer-1-like protein 4 (Fer1l4) from Mus musculus (Mouse).